A 296-amino-acid polypeptide reads, in one-letter code: Formamidopyrimidine-DNA glycosylase (296 aa).

The Schiff-base intermediate with DNA role is filled by P2. The active-site Proton donor is the E3. The Proton donor; for beta-elimination activity role is filled by K61. The DNA site is built by H104, R128, and K174. Residues 260 to 294 (HAYGQQGQACDRCGSNIIREKFANRSSHFCPRCQL) form an FPG-type zinc finger. The active-site Proton donor; for delta-elimination activity is R284.

The protein belongs to the FPG family. In terms of assembly, monomer. Requires Zn(2+) as cofactor.

The catalysed reaction is Hydrolysis of DNA containing ring-opened 7-methylguanine residues, releasing 2,6-diamino-4-hydroxy-5-(N-methyl)formamidopyrimidine.. It carries out the reaction 2'-deoxyribonucleotide-(2'-deoxyribose 5'-phosphate)-2'-deoxyribonucleotide-DNA = a 3'-end 2'-deoxyribonucleotide-(2,3-dehydro-2,3-deoxyribose 5'-phosphate)-DNA + a 5'-end 5'-phospho-2'-deoxyribonucleoside-DNA + H(+). Its function is as follows. Involved in base excision repair of DNA damaged by oxidation or by mutagenic agents. Acts as a DNA glycosylase that recognizes and removes damaged bases. Has a preference for oxidized purines, such as 7,8-dihydro-8-oxoguanine (8-oxoG). Has AP (apurinic/apyrimidinic) lyase activity and introduces nicks in the DNA strand. Cleaves the DNA backbone by beta-delta elimination to generate a single-strand break at the site of the removed base with both 3'- and 5'-phosphates. The chain is Formamidopyrimidine-DNA glycosylase from Corynebacterium diphtheriae (strain ATCC 700971 / NCTC 13129 / Biotype gravis).